Consider the following 61-residue polypeptide: Potassium channel toxin alpha-KTx 6.9 (61 aa).

An N-terminal signal peptide occupies residues 1-23 (MNAKFILLLLVVTTTTLLPDAKG). 4 disulfides stabilise this stretch: cysteine 29–cysteine 50, cysteine 35–cysteine 55, cysteine 39–cysteine 57, and cysteine 45–cysteine 60.

Belongs to the short scorpion toxin superfamily. Potassium channel inhibitor family. Alpha-KTx 06 subfamily. In terms of tissue distribution, expressed by the venom gland.

It is found in the secreted. Inhibits Kv1.2/KCNA2 and Kv1.3/KCNA3 voltage-gated potassium channels. The protein is Potassium channel toxin alpha-KTx 6.9 of Opistophthalmus carinatus (African yellow leg scorpion).